A 107-amino-acid chain; its full sequence is Large ribosomal subunit protein uL24 (107 aa).

The protein belongs to the universal ribosomal protein uL24 family. Part of the 50S ribosomal subunit.

Its function is as follows. One of two assembly initiator proteins, it binds directly to the 5'-end of the 23S rRNA, where it nucleates assembly of the 50S subunit. In terms of biological role, one of the proteins that surrounds the polypeptide exit tunnel on the outside of the subunit. This is Large ribosomal subunit protein uL24 from Mycobacterium ulcerans (strain Agy99).